A 127-amino-acid polypeptide reads, in one-letter code: Protein ApaG (127 aa).

The ApaG domain maps to 3–127; the sequence is ESEKYRIEVE…FMLAMPRVLH (125 aa).

This is Protein ApaG from Aromatoleum aromaticum (strain DSM 19018 / LMG 30748 / EbN1) (Azoarcus sp. (strain EbN1)).